Consider the following 504-residue polypeptide: Maturase K (504 aa).

The protein belongs to the intron maturase 2 family. MatK subfamily.

The protein resides in the plastid. Its subcellular location is the chloroplast. Functionally, usually encoded in the trnK tRNA gene intron. Probably assists in splicing its own and other chloroplast group II introns. In Actinidia deliciosa (Kiwi), this protein is Maturase K.